Consider the following 132-residue polypeptide: Small ribosomal subunit protein uS8 (132 aa).

The protein belongs to the universal ribosomal protein uS8 family. In terms of assembly, part of the 30S ribosomal subunit. Contacts proteins S5 and S12.

In terms of biological role, one of the primary rRNA binding proteins, it binds directly to 16S rRNA central domain where it helps coordinate assembly of the platform of the 30S subunit. In Exiguobacterium sp. (strain ATCC BAA-1283 / AT1b), this protein is Small ribosomal subunit protein uS8.